Reading from the N-terminus, the 735-residue chain is NAD(P)H-quinone oxidoreductase subunit 5, chloroplastic (735 aa).

Helical transmembrane passes span 9–29, 40–60, 89–109, 125–145, 147–167, 184–204, 219–239, 258–278, 280–300, 327–347, 354–374, 396–416, 425–445, 540–560, 600–620, and 714–734; these read WIIPFVPLPIPILIGMGLLLF, WAFPNILLLSIVMIFSLDLSI, IDSLTSIMSILITTVGIFVLI, FAYMSLFNTSMLGLVTSCNLI, IYIFWELVGMCSYLLIGFWFT, IGDFGLLLGILGFYWITGSFE, NEVHFLFVTLCASLLFAGAVA, TPISALIHAATMVAAGIFLVA, LLPLFIVIPYIMNLISLIGII, LGYMMLALGMGSYRAALFHLI, ALLFLASGSIIHSMEAIVGYS, IAFLVGTLSLCGIPPLACFWS, WLYSPIFAIIAWSTAGLTAFY, LFPMLILLLFTLFVGAIAIPF, FSVSIACFGIFTAFLLYKPFY, and FYLLLYLVYVFIFLVISYFIL.

The protein belongs to the complex I subunit 5 family. NDH is composed of at least 16 different subunits, 5 of which are encoded in the nucleus.

It is found in the plastid. The protein localises to the chloroplast thylakoid membrane. The catalysed reaction is a plastoquinone + NADH + (n+1) H(+)(in) = a plastoquinol + NAD(+) + n H(+)(out). It catalyses the reaction a plastoquinone + NADPH + (n+1) H(+)(in) = a plastoquinol + NADP(+) + n H(+)(out). Its function is as follows. NDH shuttles electrons from NAD(P)H:plastoquinone, via FMN and iron-sulfur (Fe-S) centers, to quinones in the photosynthetic chain and possibly in a chloroplast respiratory chain. The immediate electron acceptor for the enzyme in this species is believed to be plastoquinone. Couples the redox reaction to proton translocation, and thus conserves the redox energy in a proton gradient. This is NAD(P)H-quinone oxidoreductase subunit 5, chloroplastic (ndhF) from Gossypium hirsutum (Upland cotton).